The primary structure comprises 336 residues: Melanoma-associated antigen B17 (336 aa).

Basic residues predominate over residues 1-17 (MPRGQASKRRAREKRRQ). Residues 1 to 108 (MPRGQASKRR…SSSESTGRDL (108 aa)) are disordered. 2 stretches are compositionally biased toward low complexity: residues 39–54 (PSSSSPACQSPPQSFP) and 62–80 (SQRASYPSSPASAVSLTSS). Positions 90-103 (ESPNSFHGPSSSES) are enriched in polar residues. The 228-residue stretch at 109–336 (LNTKTGELVQ…RARASRSFQP (228 aa)) folds into the MAGE domain.

This chain is Melanoma-associated antigen B17 (MAGEB17), found in Homo sapiens (Human).